Here is a 416-residue protein sequence, read N- to C-terminus: Adenylosuccinate synthetase (416 aa).

GTP is bound by residues 13–19 and 41–43; these read GDEGKGK and GHT. The active-site Proton acceptor is Asp14. Mg(2+)-binding residues include Asp14 and Gly41. Residues 14-17, 39-42, Thr126, Arg140, Gln220, Thr235, and Arg299 each bind IMP; these read DEGK and NAGH. The Proton donor role is filled by His42. 295–301 lines the substrate pocket; that stretch reads VSTGRKR. GTP contacts are provided by residues Arg301, 327-329, and 405-407; these read KLD and STS.

The protein belongs to the adenylosuccinate synthetase family. Homodimer. Mg(2+) serves as cofactor.

It is found in the cytoplasm. It catalyses the reaction IMP + L-aspartate + GTP = N(6)-(1,2-dicarboxyethyl)-AMP + GDP + phosphate + 2 H(+). It functions in the pathway purine metabolism; AMP biosynthesis via de novo pathway; AMP from IMP: step 1/2. Plays an important role in the de novo pathway of purine nucleotide biosynthesis. Catalyzes the first committed step in the biosynthesis of AMP from IMP. This chain is Adenylosuccinate synthetase, found in Campylobacter jejuni subsp. jejuni serotype O:6 (strain 81116 / NCTC 11828).